Here is a 549-residue protein sequence, read N- to C-terminus: Chaperonin GroEL (549 aa).

ATP-binding positions include 30 to 33 (TLGP), Lys51, 87 to 91 (DGTTT), Gly415, and Asp495.

Belongs to the chaperonin (HSP60) family. In terms of assembly, forms a cylinder of 14 subunits composed of two heptameric rings stacked back-to-back. Interacts with the co-chaperonin GroES.

The protein resides in the cytoplasm. The enzyme catalyses ATP + H2O + a folded polypeptide = ADP + phosphate + an unfolded polypeptide.. In terms of biological role, together with its co-chaperonin GroES, plays an essential role in assisting protein folding. The GroEL-GroES system forms a nano-cage that allows encapsulation of the non-native substrate proteins and provides a physical environment optimized to promote and accelerate protein folding. The protein is Chaperonin GroEL of Hahella chejuensis (strain KCTC 2396).